We begin with the raw amino-acid sequence, 156 residues long: MLRQILSSAVAKSTRGLSFTVNRLASNLDKSEYTTPGEIIDYDDPTHLPVPEYPLRPDEPLETRKQRLLYQSRKRGMLENDLLLSTFVAKYLRDFNADQTAQYDKLINGVSNDWDIFYWATETKATPAEYDNEIMQMLKQHVKNEERVQRIRQPDL.

A mitochondrion-targeting transit peptide spans 1–12 (MLRQILSSAVAK).

It belongs to the SDHAF2 family. In terms of assembly, interacts with the flavoprotein subunit within the SDH catalytic dimer.

Its subcellular location is the mitochondrion matrix. Functionally, plays an essential role in the assembly of succinate dehydrogenase (SDH), an enzyme complex (also referred to as respiratory complex II) that is a component of both the tricarboxylic acid (TCA) cycle and the mitochondrial electron transport chain, and which couples the oxidation of succinate to fumarate with the reduction of ubiquinone (coenzyme Q) to ubiquinol. Required for flavinylation (covalent attachment of FAD) of the flavoprotein subunit of the SDH catalytic dimer. In Drosophila willistoni (Fruit fly), this protein is Succinate dehydrogenase assembly factor 2-B, mitochondrial.